A 317-amino-acid chain; its full sequence is tRNA-dihydrouridine(16) synthase (317 aa).

FMN contacts are provided by residues proline 7–glutamate 9 and glutamine 68. The active-site Proton donor is cysteine 98. FMN is bound by residues lysine 139, asparagine 199–glutamate 201, and glycine 223–arginine 224.

The protein belongs to the Dus family. DusC subfamily. Requires FMN as cofactor.

It carries out the reaction 5,6-dihydrouridine(16) in tRNA + NADP(+) = uridine(16) in tRNA + NADPH + H(+). It catalyses the reaction 5,6-dihydrouridine(16) in tRNA + NAD(+) = uridine(16) in tRNA + NADH + H(+). Its function is as follows. Catalyzes the synthesis of 5,6-dihydrouridine (D), a modified base found in the D-loop of most tRNAs, via the reduction of the C5-C6 double bond in target uridines. Specifically modifies U16 in tRNAs. In Pseudomonas syringae pv. tomato (strain ATCC BAA-871 / DC3000), this protein is tRNA-dihydrouridine(16) synthase.